Consider the following 79-residue polypeptide: Small ribosomal subunit protein uS11 (79 aa).

Serine 14 carries the phosphoserine modification. Residues lysine 59 and lysine 61 each participate in a glycyl lysine isopeptide (Lys-Gly) (interchain with G-Cter in SUMO2) cross-link.

It belongs to the universal ribosomal protein uS11 family. As to quaternary structure, component of the small ribosomal subunit. Part of the small subunit (SSU) processome, composed of more than 70 proteins and the RNA chaperone small nucleolar RNA (snoRNA) U3.

The protein localises to the cytoplasm. It localises to the nucleus. The protein resides in the nucleolus. Its function is as follows. Component of the small ribosomal subunit. The ribosome is a large ribonucleoprotein complex responsible for the synthesis of proteins in the cell. Part of the small subunit (SSU) processome, first precursor of the small eukaryotic ribosomal subunit. During the assembly of the SSU processome in the nucleolus, many ribosome biogenesis factors, an RNA chaperone and ribosomal proteins associate with the nascent pre-rRNA and work in concert to generate RNA folding, modifications, rearrangements and cleavage as well as targeted degradation of pre-ribosomal RNA by the RNA exosome. The sequence is that of Small ribosomal subunit protein uS11 (RPS14) from Sus scrofa (Pig).